A 108-amino-acid chain; its full sequence is Thiosulfate sulfurtransferase GlpE (108 aa).

The 89-residue stretch at 17–105 folds into the Rhodanese domain; sequence QEKEAVLVDI…WQRQFPAEVA (89 aa). The active-site Cysteine persulfide intermediate is the C65.

It belongs to the GlpE family.

It is found in the cytoplasm. The enzyme catalyses thiosulfate + hydrogen cyanide = thiocyanate + sulfite + 2 H(+). The catalysed reaction is thiosulfate + [thioredoxin]-dithiol = [thioredoxin]-disulfide + hydrogen sulfide + sulfite + 2 H(+). Functionally, transferase that catalyzes the transfer of sulfur from thiosulfate to thiophilic acceptors such as cyanide or dithiols. May function in a CysM-independent thiosulfate assimilation pathway by catalyzing the conversion of thiosulfate to sulfite, which can then be used for L-cysteine biosynthesis. In Escherichia coli O157:H7, this protein is Thiosulfate sulfurtransferase GlpE.